The sequence spans 142 residues: Acidic phospholipase A2 KBf-grIB (142 aa).

Disulfide bonds link C28-C94, C44-C141, C46-C62, C61-C122, C68-C115, C78-C108, and C101-C113. Residues Y45, G47, and G49 each coordinate Ca(2+). Residue H65 is part of the active site. D66 is a binding site for Ca(2+). D116 is a catalytic residue.

The protein belongs to the phospholipase A2 family. Group I subfamily. D49 sub-subfamily. The cofactor is Ca(2+). In terms of tissue distribution, expressed by the venom gland.

The protein localises to the secreted. The catalysed reaction is a 1,2-diacyl-sn-glycero-3-phosphocholine + H2O = a 1-acyl-sn-glycero-3-phosphocholine + a fatty acid + H(+). Its function is as follows. PLA2 catalyzes the calcium-dependent hydrolysis of the 2-acyl groups in 3-sn-phosphoglycerides. The protein is Acidic phospholipase A2 KBf-grIB of Bungarus fasciatus (Banded krait).